A 147-amino-acid chain; its full sequence is 3-dehydroquinate dehydratase (147 aa).

Catalysis depends on tyrosine 22, which acts as the Proton acceptor. Substrate-binding residues include asparagine 73, histidine 79, and aspartate 86. Catalysis depends on histidine 99, which acts as the Proton donor. Substrate contacts are provided by residues 100 to 101 (LS) and arginine 110.

The protein belongs to the type-II 3-dehydroquinase family. As to quaternary structure, homododecamer.

The enzyme catalyses 3-dehydroquinate = 3-dehydroshikimate + H2O. It participates in metabolic intermediate biosynthesis; chorismate biosynthesis; chorismate from D-erythrose 4-phosphate and phosphoenolpyruvate: step 3/7. Catalyzes a trans-dehydration via an enolate intermediate. This Synechococcus sp. (strain WH7803) protein is 3-dehydroquinate dehydratase.